Consider the following 358-residue polypeptide: Protein-glutamate methylesterase/protein-glutamine glutaminase 1 (358 aa).

The 118-residue stretch at 8 to 125 (RVLIVDDSAV…ARGLEGYAEE (118 aa)) folds into the Response regulatory domain. 4-aspartylphosphate is present on D59. A CheB-type methylesterase domain is found at 165–352 (FRTTDRLIAI…LDRVAERLLA (188 aa)). Residues S177, H203, and D299 contribute to the active site.

The protein belongs to the CheB family. In terms of processing, phosphorylated by CheA. Phosphorylation of the N-terminal regulatory domain activates the methylesterase activity.

Its subcellular location is the cytoplasm. It catalyses the reaction [protein]-L-glutamate 5-O-methyl ester + H2O = L-glutamyl-[protein] + methanol + H(+). The enzyme catalyses L-glutaminyl-[protein] + H2O = L-glutamyl-[protein] + NH4(+). Functionally, involved in chemotaxis. Part of a chemotaxis signal transduction system that modulates chemotaxis in response to various stimuli. Catalyzes the demethylation of specific methylglutamate residues introduced into the chemoreceptors (methyl-accepting chemotaxis proteins or MCP) by CheR. Also mediates the irreversible deamidation of specific glutamine residues to glutamic acid. The chain is Protein-glutamate methylesterase/protein-glutamine glutaminase 1 from Xanthomonas axonopodis pv. citri (strain 306).